The primary structure comprises 671 residues: TOM1-like protein 6 (671 aa).

Ala2 is subject to N-acetylalanine. The VHS domain occupies Ala15–Pro144. Ser147 is subject to Phosphoserine. Positions Glu229 to Ser317 constitute a GAT domain. 2 disordered regions span residues Pro320 to Lys620 and Gly636 to Ile671. Over residues Ala334 to Ala362 the composition is skewed to low complexity. The span at Asp372–Phe382 shows a compositional bias: acidic residues. The span at Ser395 to Ser405 shows a compositional bias: polar residues. Residues Asn407–Leu417 are compositionally biased toward low complexity. The span at Ser444–Ala459 shows a compositional bias: pro residues. Positions Ala483 to Tyr554 are enriched in low complexity. 2 stretches are compositionally biased toward polar residues: residues Ala562–Pro598 and Gln605–Ser616. Ser596 carries the post-translational modification Phosphoserine. The span at Asn647–Ser663 shows a compositional bias: low complexity.

The protein belongs to the TOM1 family. Ubiquitously expressed.

The protein resides in the endosome. It is found in the multivesicular body. Its subcellular location is the cytoplasm. The protein localises to the early endosome membrane. Functionally, acts as a gatekeeper for degradative protein sorting to the vacuole. Plays a role in recognition of ubiquitinated PIN2 auxin carrier at the plasma membrane and further to its endocytic sorting. Binds ubiquitin in vitro. Might contribute to the loading of the ESCRT machinery. In Arabidopsis thaliana (Mouse-ear cress), this protein is TOM1-like protein 6.